Consider the following 97-residue polypeptide: Large ribosomal subunit protein eL21 (97 aa).

The tract at residues 1-26 (MQKSEGFRSKTRYKLQKHPRQKGMAP) is disordered. The segment covering 9–21 (SKTRYKLQKHPRQ) has biased composition (basic residues).

This sequence belongs to the eukaryotic ribosomal protein eL21 family.

This is Large ribosomal subunit protein eL21 from Methanococcus maripaludis (strain C6 / ATCC BAA-1332).